A 1488-amino-acid chain; its full sequence is Chromosome partition protein MukB (1488 aa).

Residue 34 to 41 participates in ATP binding; it reads GGNGAGKS. Coiled-coil stretches lie at residues 326 to 418, 444 to 472, and 509 to 602; these read LEAD…QYNQ, LDTF…QTAH, and RHLA…RRAP. A flexible hinge region spans residues 666–783; sequence PGGAEDQRLN…SLPIFGRAAR (118 aa). Coiled coils occupy residues 835 to 923, 977 to 1116, and 1209 to 1265; these read EAEI…AKLE, EMLS…AKAG, and VEAI…LQSV. The segment at 1049–1074 is disordered; that stretch reads ADSGAEERARQRRDELHAQLSNNRSR. Over residues 1051-1065 the composition is skewed to basic and acidic residues; sequence SGAEERARQRRDELH.

This sequence belongs to the SMC family. MukB subfamily. Homodimerization via its hinge domain. Binds to DNA via its C-terminal region. Interacts, and probably forms a ternary complex, with MukE and MukF via its C-terminal region. The complex formation is stimulated by calcium or magnesium. Interacts with tubulin-related protein FtsZ.

The protein resides in the cytoplasm. Its subcellular location is the nucleoid. In terms of biological role, plays a central role in chromosome condensation, segregation and cell cycle progression. Functions as a homodimer, which is essential for chromosome partition. Involved in negative DNA supercoiling in vivo, and by this means organize and compact chromosomes. May achieve or facilitate chromosome segregation by condensation DNA from both sides of a centrally located replisome during cell division. This is Chromosome partition protein MukB from Salmonella heidelberg (strain SL476).